A 137-amino-acid polypeptide reads, in one-letter code: Large ribosomal subunit protein uL16 (137 aa).

The protein belongs to the universal ribosomal protein uL16 family. Part of the 50S ribosomal subunit.

Binds 23S rRNA and is also seen to make contacts with the A and possibly P site tRNAs. This Xanthomonas axonopodis pv. citri (strain 306) protein is Large ribosomal subunit protein uL16.